The sequence spans 480 residues: Initiation-specific alpha-1,6-mannosyltransferase (480 aa).

At 1–15 the chain is on the cytoplasmic side; that stretch reads MSRKLSHLIATRKSK. Residues 16 to 30 form a helical; Signal-anchor for type II membrane protein membrane-spanning segment; the sequence is TIVVTVLLIYSLLTF. Residues 31 to 480 lie on the Lumenal side of the membrane; it reads HLSNKRLLSQ…EDADKNAGHK (450 aa). The DXD motif motif lies at 187-189; that stretch reads DMD. 4 N-linked (GlcNAc...) asparagine glycosylation sites follow: Asn203, Asn281, Asn341, and Asn393.

This sequence belongs to the glycosyltransferase 32 family. Requires Mn(2+) as cofactor. Post-translationally, glycosylated.

It localises to the endoplasmic reticulum membrane. It is found in the golgi apparatus membrane. It carries out the reaction Transfers an alpha-D-mannosyl residue from GDP-mannose into lipid-linked oligosaccharide, forming an alpha-(1-&gt;6)-D-mannosyl-D-mannose linkage.. Functionally, mannosyltransferase involved in outer chain elongation of asparagine-linked oligosaccharides of the type Man(9)GlcNAc(2). Adds the first alpha-1,6-mannose to the Man(8)GlcNAc(2) and Man(9)GlcNAc(2), but not Man(5)GlcNAc(2), endoplasmic reticulum intermediates. Represents the first enzymatic event required for synthesis of outer chain mannose linkages on yeast secretory proteins. Also has the potential to transfer a second alpha-1,6-mannose to the Man(8)GlcNAc(2) core oligosaccharide. This is Initiation-specific alpha-1,6-mannosyltransferase from Saccharomyces cerevisiae (strain ATCC 204508 / S288c) (Baker's yeast).